The chain runs to 256 residues: Hydroxyacylglutathione hydrolase (256 aa).

Positions 56, 58, 60, 61, 114, 133, and 171 each coordinate Zn(2+).

It belongs to the metallo-beta-lactamase superfamily. Glyoxalase II family. In terms of assembly, monomer. Requires Zn(2+) as cofactor.

It carries out the reaction an S-(2-hydroxyacyl)glutathione + H2O = a 2-hydroxy carboxylate + glutathione + H(+). It participates in secondary metabolite metabolism; methylglyoxal degradation; (R)-lactate from methylglyoxal: step 2/2. In terms of biological role, thiolesterase that catalyzes the hydrolysis of S-D-lactoyl-glutathione to form glutathione and D-lactic acid. The sequence is that of Hydroxyacylglutathione hydrolase from Rhodobacter capsulatus (Rhodopseudomonas capsulata).